The chain runs to 314 residues: MSKNNHANHSNHLENHDLDNFSKTGYSNSRLNRHTMYTPEPKLSFDAMTIVGNLNKNNAHKLSEFMSVEPQIRLWDILQTKFKAKALQEKVYIEYDKVKADTWDRRNMRVEFNPNKLTHEEMLWLKQNIIDYMEDDGFTRLDLAFDFEYDLSDYYAMTDKSVKKTIFYGRNGKPETKYFGVRDSDRFIRIYNKKQERKDNADIKIMSEHLWRVEIELKRDMVDYWNDCFNDLHILQPDWKTIERTSDRAMVFMLLNDEEEWGKLERRTKNKYKKLIKEISLIDLTDLMKSTLKANEKQLQKQIDFWQREFRFWK.

A compositionally biased stretch (polar residues) spans 1 to 10 (MSKNNHANHS). Positions 1 to 25 (MSKNNHANHSNHLENHDLDNFSKTG) are disordered. Over residues 11 to 20 (NHLENHDLDN) the composition is skewed to basic and acidic residues.

This sequence belongs to the plasmid replication initiation factor family.

In terms of biological role, this protein is probably a specific topoisomerase involved in initiating replication. This protein is specifically required and may be rate-limiting for replication of the plasmid in vivo. This Staphylococcus aureus protein is Replication initiation protein (repN).